Reading from the N-terminus, the 160-residue chain is Nucleotide-binding protein PSHAa2277 (160 aa).

It belongs to the YajQ family.

Nucleotide-binding protein. The protein is Nucleotide-binding protein PSHAa2277 of Pseudoalteromonas translucida (strain TAC 125).